The primary structure comprises 91 residues: M-myrmeciitoxin-Mb3a (91 aa).

An N-terminal signal peptide occupies residues 1-21 (MKLSCLSLALAIILILAIVHS). Residues 22–54 (PNMEVKALADPEADAFGEANAFGEADAFAEANA) constitute a propeptide that is removed on maturation.

As to quaternary structure, homodimer; disulfide-linked. Expressed by the venom gland and reservoir.

The protein localises to the secreted. Causes a significant and dose-dependent histamine release, probably by influencing the signal transduction of mast cells through a non-IgE-mediated pathway. This peptide does not have cytotoxic activities. The protein is M-myrmeciitoxin-Mb3a of Myrmecia banksi (Jack jumper ant).